The chain runs to 248 residues: 2,3-dihydro-2,3-dihydroxybenzoate dehydrogenase (248 aa).

9–33 contacts NAD(+); it reads WVTGAGKGIGYATALAFVEAGAKVT. S131 is a binding site for substrate. The active-site Proton acceptor is Y144.

It belongs to the short-chain dehydrogenases/reductases (SDR) family. As to quaternary structure, homotetramer; dimer of dimers. EntA and EntE interact together.

It carries out the reaction (2S,3S)-2,3-dihydroxy-2,3-dihydrobenzoate + NAD(+) = 2,3-dihydroxybenzoate + NADH + H(+). It functions in the pathway siderophore biosynthesis; enterobactin biosynthesis. Its activity is regulated as follows. Inhibited by cis-2-hydroxy-3-cyclohexen-1-carboxylate, cis-2-hydroxycyclohexane-1-carboxylate and trans-2-hydroxycyclohexane-1-carboxylate. Involved in the biosynthesis of the siderophore enterobactin (enterochelin), which is a macrocyclic trimeric lactone of N-(2,3-dihydroxybenzoyl)-serine. Catalyzes the reversible NAD-dependent oxidation of the C3-hydroxyl group of 2,3-dihydro-2,3-dihydroxybenzoate (2,3-diDHB), producing the transient intermediate 2-hydroxy-3-oxo-4,6-cyclohexadiene-1-carboxylate, which undergoes rapid aromatization to the final product, 2,3-dihydroxybenzoate (2,3-DHB). Only the compounds with a C3-hydroxyl group such as methyl 2,3-dihydro-2,3-dihydroxybenzoate, methyl-3-hydroxy-1,4-cyclohexadiene-1-carboxylate, trans-3-hydroxy-2-cyclohexene-1-carboxylate, cis-3-hydroxy-4-cyclohexene-1-carboxylate, cis-3-hydroxycyclohexane-1-carboxylic acid are oxidized to the corresponding ketone products. The stereospecificity of the C3 allylic alcohol group oxidation is 3R in a 1R,3R dihydro substrate. It can also increase the DHB-AMP ligase activity of EntE by interaction EntE. The sequence is that of 2,3-dihydro-2,3-dihydroxybenzoate dehydrogenase from Escherichia coli (strain K12).